A 340-amino-acid chain; its full sequence is Heat-inducible transcription repressor HrcA (340 aa).

It belongs to the HrcA family.

Negative regulator of class I heat shock genes (grpE-dnaK-dnaJ and groELS operons). Prevents heat-shock induction of these operons. This chain is Heat-inducible transcription repressor HrcA, found in Burkholderia cenocepacia (strain HI2424).